The chain runs to 213 residues: Orotate phosphoribosyltransferase (213 aa).

Lys-26 contacts 5-phospho-alpha-D-ribose 1-diphosphate. Position 34–35 (34–35 (FF)) interacts with orotate. 5-phospho-alpha-D-ribose 1-diphosphate is bound by residues 72–73 (YK), Arg-98, Lys-99, Lys-102, His-104, and 123–131 (DDVISAGTS). 2 residues coordinate orotate: Ser-127 and Arg-155.

It belongs to the purine/pyrimidine phosphoribosyltransferase family. PyrE subfamily. In terms of assembly, homodimer. Mg(2+) is required as a cofactor.

The enzyme catalyses orotidine 5'-phosphate + diphosphate = orotate + 5-phospho-alpha-D-ribose 1-diphosphate. It participates in pyrimidine metabolism; UMP biosynthesis via de novo pathway; UMP from orotate: step 1/2. Catalyzes the transfer of a ribosyl phosphate group from 5-phosphoribose 1-diphosphate to orotate, leading to the formation of orotidine monophosphate (OMP). The protein is Orotate phosphoribosyltransferase of Laribacter hongkongensis (strain HLHK9).